A 362-amino-acid chain; its full sequence is MKKNIEPCYYGDYLQLDKILGAQDLQSEKYGDGAHEEMLFIIVHQVYELWFKQVLHELNAVIDTFNQEAVKDQQLTQVVHRLQRIIQIQKLMNDQIAIMETMTPQQFLSFRDYLVPASGFQSIQFKRLEISLGLKREFRIDFDKQSFYNRLTDKDRALLENLENKPSLFELVDKWLSRMPLLKTEDFDFWQYYKDAADEMLKDDHHTVSTSDMLSDTEKRQEIKDLQATMENFDALFNETQFEKLRGEGKFRLSHNALLSALFIKQYSEEPIFNLPFQLITALTEIDEQLTIWRYRHAMMVQRMLGTKIGTGGSSGHHYLKKTTESNRIYLDFFNMATFLLPKSALPDLPESVRRRLGFYLQ.

Substrate contacts are provided by residues 40 to 44 and arginine 111; that span reads FIIVH. Histidine 297 contributes to the heme binding site. Residue threonine 311 participates in substrate binding.

It belongs to the tryptophan 2,3-dioxygenase family. Homotetramer. Heme is required as a cofactor.

The catalysed reaction is L-tryptophan + O2 = N-formyl-L-kynurenine. It participates in amino-acid degradation; L-tryptophan degradation via kynurenine pathway; L-kynurenine from L-tryptophan: step 1/2. Functionally, heme-dependent dioxygenase that catalyzes the oxidative cleavage of the L-tryptophan (L-Trp) pyrrole ring and converts L-tryptophan to N-formyl-L-kynurenine. Catalyzes the oxidative cleavage of the indole moiety. The protein is Tryptophan 2,3-dioxygenase of Alteromonas mediterranea (strain DSM 17117 / CIP 110805 / LMG 28347 / Deep ecotype).